A 455-amino-acid chain; its full sequence is Serine--tRNA ligase (455 aa).

252-254 (TAE) provides a ligand contact to L-serine. ATP is bound by residues 283–285 (RKE) and Val-299. Residue Glu-306 coordinates L-serine. 370–373 (EVVS) contacts ATP. Thr-406 contacts L-serine.

The protein belongs to the class-II aminoacyl-tRNA synthetase family. Type-1 seryl-tRNA synthetase subfamily. Homodimer. The tRNA molecule binds across the dimer.

Its subcellular location is the cytoplasm. The enzyme catalyses tRNA(Ser) + L-serine + ATP = L-seryl-tRNA(Ser) + AMP + diphosphate + H(+). It catalyses the reaction tRNA(Sec) + L-serine + ATP = L-seryl-tRNA(Sec) + AMP + diphosphate + H(+). It participates in aminoacyl-tRNA biosynthesis; selenocysteinyl-tRNA(Sec) biosynthesis; L-seryl-tRNA(Sec) from L-serine and tRNA(Sec): step 1/1. Its function is as follows. Catalyzes the attachment of serine to tRNA(Ser). Is also able to aminoacylate tRNA(Sec) with serine, to form the misacylated tRNA L-seryl-tRNA(Sec), which will be further converted into selenocysteinyl-tRNA(Sec). This Pyrococcus horikoshii (strain ATCC 700860 / DSM 12428 / JCM 9974 / NBRC 100139 / OT-3) protein is Serine--tRNA ligase.